The primary structure comprises 191 residues: GDP-mannose pyrophosphatase (191 aa).

GDP-alpha-D-mannose is bound by residues Tyr17, 38-40, Arg67, and 85-87; these read KRE and AGL. A Nudix hydrolase domain is found at 43 to 180; the sequence is DRGNGATILL…EIRDGKTVLL (138 aa). Mg(2+) contacts are provided by Ala85, Glu100, and Glu104. Positions 86–106 match the Nudix box motif; that stretch reads GLLDNDEPEVCIRKEAIEETG. GDP-alpha-D-mannose contacts are provided by residues Glu104, Glu127, 150 to 151, and Lys176; that span reads DE. Glu151 serves as a coordination point for Mg(2+).

The protein belongs to the Nudix hydrolase family. NudK subfamily. In terms of assembly, homodimer. Mg(2+) serves as cofactor.

It catalyses the reaction GDP-alpha-D-mannose + H2O = alpha-D-mannose 1-phosphate + GMP + 2 H(+). Its function is as follows. Nucleoside diphosphate sugar hydrolase that hydrolyzes GDP-mannose as its preferred substrate, yielding GMP and mannose-1-phosphate. The polypeptide is GDP-mannose pyrophosphatase (nudK) (Salmonella arizonae (strain ATCC BAA-731 / CDC346-86 / RSK2980)).